Here is a 126-residue protein sequence, read N- to C-terminus: Holo-[acyl-carrier-protein] synthase (126 aa).

Mg(2+) contacts are provided by Asp-9 and Glu-57.

The protein belongs to the P-Pant transferase superfamily. AcpS family. Requires Mg(2+) as cofactor.

Its subcellular location is the cytoplasm. It carries out the reaction apo-[ACP] + CoA = holo-[ACP] + adenosine 3',5'-bisphosphate + H(+). In terms of biological role, transfers the 4'-phosphopantetheine moiety from coenzyme A to a Ser of acyl-carrier-protein. This is Holo-[acyl-carrier-protein] synthase from Alteromonas mediterranea (strain DSM 17117 / CIP 110805 / LMG 28347 / Deep ecotype).